Consider the following 360-residue polypeptide: MKYLKILIIVTIFFFLLINVINCIDRKEIVQKEVKIKFKNLKSTLIKKYSESNMEKIQKHLKHILVERVADTPNHKKVREYIISQFDQLYWDIELDSFKDNTPFGEKTFTNIIVTSKFVNDDDEDDIDTKESNGNISSEPPKTLVLSAHYDSKYFKEFKFFGATDSAVPCSMLIDLAISLQSEIKKSKKKLMIIFFDGEEAFKEWSDTDSLYGSRHLANLLLDKKVITKDNEDLPISSSFYNTVEAFILLDLLGTPNPRFYMFNKKTESLFKKLSDIEDKLSLKRFISPKANKYFQNHFIGSDIQDDHIPFLNYVPTLHIIPYPFPNVWHTEKDDESCLDKNTIEDLSKIFKIFVGSYLI.

Positions 1–23 (MKYLKILIIVTIFFFLLINVINC) are cleaved as a signal peptide. Asn-135 is a glycosylation site (N-linked (GlcNAc...) asparagine). Asp-165 is a binding site for Zn(2+). The active-site Proton acceptor is Glu-199. Position 200 (Glu-200) interacts with Zn(2+). The active-site Proton acceptor is the Asp-251. Zn(2+) is bound at residue His-330.

Belongs to the glutaminyl-peptide cyclotransferase family.

Its subcellular location is the secreted. The enzyme catalyses N-terminal L-glutaminyl-[peptide] = N-terminal 5-oxo-L-prolyl-[peptide] + NH4(+). Functionally, responsible for the biosynthesis of pyroglutamyl peptides. Has a bias against acidic and tryptophan residues adjacent to the N-terminal glutaminyl residue and a lack of importance of chain length after the second residue. Also catalyzes N-terminal pyroglutamate formation. The sequence is that of Glutaminyl-peptide cyclotransferase (qpct) from Dictyostelium discoideum (Social amoeba).